The sequence spans 90 residues: Probable Fe(2+)-trafficking protein (90 aa).

The protein belongs to the Fe(2+)-trafficking protein family.

Functionally, could be a mediator in iron transactions between iron acquisition and iron-requiring processes, such as synthesis and/or repair of Fe-S clusters in biosynthetic enzymes. The chain is Probable Fe(2+)-trafficking protein from Pseudomonas putida (strain W619).